The following is a 255-amino-acid chain: Electron transfer flavoprotein subunit beta (255 aa).

Position 2 is an N-acetylalanine (Ala2). Residues Ala9, 39-42 (NPFC), Cys66, and 123-134 (GKQAIDDDCNQT) each bind AMP. A recognition loop region spans residues 183-205 (ADLRLNEPRYATLPNIMKAKKKK). Position 200 is an N6,N6,N6-trimethyllysine; by ETFBKMT; alternate (Lys200). Lys200 bears the N6-acetyllysine; alternate mark. Lys200 bears the N6-methyllysine; alternate mark. The residue at position 203 (Lys203) is an N6,N6,N6-trimethyllysine; by ETFBKMT. N6-acetyllysine; alternate is present on Lys210. At Lys210 the chain carries N6-succinyllysine; alternate. A phosphoserine mark is found at Ser223 and Ser226. Position 238 is an N6-acetyllysine (Lys238). Lys248 bears the N6-acetyllysine; alternate mark. An N6-succinyllysine; alternate modification is found at Lys248.

The protein belongs to the ETF beta-subunit/FixA family. As to quaternary structure, heterodimer composed of ETFA and ETFB. Identified in a complex that contains ETFA, ETFB and ETFRF1. Interacts with ACADM. Post-translationally, methylated. Trimethylation at Lys-200 and Lys-203 may negatively regulate the activity in electron transfer from acyl-CoA dehydrogenases.

It is found in the mitochondrion matrix. Its function is as follows. Heterodimeric electron transfer flavoprotein that accepts electrons from several mitochondrial dehydrogenases, including acyl-CoA dehydrogenases, glutaryl-CoA and sarcosine dehydrogenase. It transfers the electrons to the main mitochondrial respiratory chain via ETF-ubiquinone oxidoreductase. Required for normal mitochondrial fatty acid oxidation and normal amino acid metabolism. ETFB binds an AMP molecule that probably has a purely structural role. This Pongo abelii (Sumatran orangutan) protein is Electron transfer flavoprotein subunit beta.